Consider the following 75-residue polypeptide: Small ribosomal subunit protein bS18 (75 aa).

It belongs to the bacterial ribosomal protein bS18 family. In terms of assembly, part of the 30S ribosomal subunit. Forms a tight heterodimer with protein bS6.

Binds as a heterodimer with protein bS6 to the central domain of the 16S rRNA, where it helps stabilize the platform of the 30S subunit. This chain is Small ribosomal subunit protein bS18, found in Cereibacter sphaeroides (strain KD131 / KCTC 12085) (Rhodobacter sphaeroides).